We begin with the raw amino-acid sequence, 590 residues long: DNA primase (590 aa).

The CHC2-type zinc finger occupies 37 to 61; it reads CPFHKEKTPSFSVSPTKQFYHCFSC. In terms of domain architecture, Toprim spans 255-337; it reads GRILVVEGYM…DKSLHFLFLP (83 aa). Mg(2+)-binding residues include E261, D305, and D307.

It belongs to the DnaG primase family. As to quaternary structure, monomer. Interacts with DnaB. The cofactor is Zn(2+). Mg(2+) is required as a cofactor.

It catalyses the reaction ssDNA + n NTP = ssDNA/pppN(pN)n-1 hybrid + (n-1) diphosphate.. RNA polymerase that catalyzes the synthesis of short RNA molecules used as primers for DNA polymerase during DNA replication. In Neisseria meningitidis serogroup B (strain ATCC BAA-335 / MC58), this protein is DNA primase.